Here is a 287-residue protein sequence, read N- to C-terminus: Hydroxysteroid 11-beta-dehydrogenase 1-like protein (287 aa).

Positions 1 to 15 are cleaved as a signal peptide; sequence MKVLLLTGLGALFFA. NADP(+) contacts are provided by residues 36-62, 87-88, and 114-116; these read GASA…TAHT, DM, and NHI. Serine 165 lines the substrate pocket. Tyrosine 178 (proton acceptor) is an active-site residue. NADP(+)-binding positions include 178–182 and 211–217; these read YSAAK and GLRDRAS.

The protein belongs to the short-chain dehydrogenases/reductases (SDR) family.

Its subcellular location is the secreted. The enzyme catalyses cortisone + NADPH + H(+) = cortisol + NADP(+). Its function is as follows. Unidirectional NADP(+)-dependent cortisol dehydrogenase (in vitro). The sequence is that of Hydroxysteroid 11-beta-dehydrogenase 1-like protein (HSD11B1L) from Macaca fascicularis (Crab-eating macaque).